A 523-amino-acid polypeptide reads, in one-letter code: Galactarate dehydratase (L-threo-forming) (523 aa).

Belongs to the UxaA family. As to quaternary structure, homodimer. Fe(2+) serves as cofactor.

The catalysed reaction is galactarate = 5-dehydro-4-deoxy-D-glucarate + H2O. The protein operates within carbohydrate acid metabolism; galactarate degradation; D-glycerate from galactarate: step 1/3. Catalyzes the dehydration of galactarate to form 5-dehydro-4-deoxy-D-glucarate (5-KDG). The protein is Galactarate dehydratase (L-threo-forming) of Escherichia coli (strain K12).